Consider the following 52-residue polypeptide: Alpha-1-antiproteinase 3 (52 aa).

The disordered stretch occupies residues 1–20 (EDLQGDAVPEEXATKDDNEH).

This sequence belongs to the serpin family. In terms of processing, N-glycosylated; contains glycans with bi- and triantennary side chains. In terms of tissue distribution, plasma.

It localises to the secreted. This is Alpha-1-antiproteinase 3 from Equus caballus (Horse).